The following is a 299-amino-acid chain: Probable lipid kinase YegS (299 aa).

The 132-residue stretch at 2-133 (AEFPASLLIL…IDMAQVNKQT (132 aa)) folds into the DAGKc domain. ATP is bound by residues Thr-40, 66–72 (GDGTINE), and Thr-95. Mg(2+) is bound by residues Leu-215, Asp-218, and Leu-220. Glu-271 serves as the catalytic Proton acceptor.

This sequence belongs to the diacylglycerol/lipid kinase family. YegS lipid kinase subfamily. The cofactor is Mg(2+). Ca(2+) is required as a cofactor.

Its subcellular location is the cytoplasm. Functionally, probably phosphorylates lipids; the in vivo substrate is unknown. In Escherichia coli (strain 55989 / EAEC), this protein is Probable lipid kinase YegS.